The following is a 440-amino-acid chain: MHFLDDNIQIKIDKFYKKNSLNKNRVIVAFSGGADSTTLLLNLKYYLSNNIIAFYFAHFIRPDNEQNKEIEHVKGFCDLYNIALQIKKCDIDIKSESVRLGVSIEELARKCRYNALENALKENDANYIALAHNENDQIETIIMRFFQGSFLDGLAGIPSVNKNIIRPLLEVSRPEIENFLSLNNIRVFIDSTNSQNLYLRNKVRNNLLPSIEKIFKGYEKCLKRISEFSKEFVNYFEKDEFFPVEKGKYYYSFDLKAFLDFPKYLVFRLIFKILNSEGIVAKISYKALNELFKIEIDRKKNNVLLKTNDFFLEKRHNKINLIFKRDEKFYKPFDFILEVGKWHSLSLGKILLKCLECNAASVSRLKCCSYEFRYKFFKDKLKAKKFFSKFIRCNPIYLMLLALDNRLIGIIDLNTLNLVWSEKSILKKISISLIGGLLKE.

Residue 31–36 (SGGADS) participates in ATP binding.

It belongs to the tRNA(Ile)-lysidine synthase family.

It localises to the cytoplasm. The catalysed reaction is cytidine(34) in tRNA(Ile2) + L-lysine + ATP = lysidine(34) in tRNA(Ile2) + AMP + diphosphate + H(+). Ligates lysine onto the cytidine present at position 34 of the AUA codon-specific tRNA(Ile) that contains the anticodon CAU, in an ATP-dependent manner. Cytidine is converted to lysidine, thus changing the amino acid specificity of the tRNA from methionine to isoleucine. The chain is tRNA(Ile)-lysidine synthase from Borreliella afzelii (strain PKo) (Borrelia afzelii).